Here is a 228-residue protein sequence, read N- to C-terminus: Carbonic anhydrase (228 aa).

Residues Cys-56, Asp-58, His-112, and Cys-115 each coordinate Zn(2+).

The protein belongs to the beta-class carbonic anhydrase family. Zn(2+) serves as cofactor.

It catalyses the reaction hydrogencarbonate + H(+) = CO2 + H2O. Functionally, catalyzes the reversible hydration of CO(2) to H(2)CO(3). The main role may be to provide inorganic carbon for the bicarbonate-dependent carboxylation reactions catalyzed by pyruvate carboxylase, acetyl-CoA carboxylase and carbamoyl-phosphate synthetase. Involved in osmoadaptation. This is Carbonic anhydrase from Emericella nidulans (strain FGSC A4 / ATCC 38163 / CBS 112.46 / NRRL 194 / M139) (Aspergillus nidulans).